Consider the following 669-residue polypeptide: uncharacterized protein (669 aa).

12 consecutive transmembrane segments (helical) span residues 9-29, 48-68, 87-107, 139-159, 186-206, 224-244, 259-279, 314-334, 345-365, 397-417, 444-464, and 470-490; these read PLVI…IFIA, FSWF…ILSV, FLSW…MFFG, WGIH…YFGF, AIDV…LGFG, SFAL…FSAI, LTLA…LYLL, WTVL…LFIA, FIFG…TVFG, YLPL…LFFI, AIMW…SGGL, and MTLI…FSLW.

It belongs to the BCCT transporter (TC 2.A.15) family.

The protein localises to the cell inner membrane. This is an uncharacterized protein from Haemophilus influenzae (strain ATCC 51907 / DSM 11121 / KW20 / Rd).